A 190-amino-acid chain; its full sequence is Potassium-transporting ATPase KdpC subunit (190 aa).

A helical transmembrane segment spans residues 10–30 (TFIFLLLITGGVYPLLTTVLG).

It belongs to the KdpC family. In terms of assembly, the system is composed of three essential subunits: KdpA, KdpB and KdpC.

It is found in the cell inner membrane. In terms of biological role, part of the high-affinity ATP-driven potassium transport (or Kdp) system, which catalyzes the hydrolysis of ATP coupled with the electrogenic transport of potassium into the cytoplasm. This subunit acts as a catalytic chaperone that increases the ATP-binding affinity of the ATP-hydrolyzing subunit KdpB by the formation of a transient KdpB/KdpC/ATP ternary complex. The sequence is that of Potassium-transporting ATPase KdpC subunit from Escherichia coli (strain 55989 / EAEC).